We begin with the raw amino-acid sequence, 314 residues long: 3'-5' exoribonuclease YhaM (314 aa).

The HD domain maps to 163–279 (HVVSMLDLAK…LHYIDNLDAK (117 aa)).

Belongs to the YhaM family.

Its function is as follows. Shows a 3'-5' exoribonuclease activity. The protein is 3'-5' exoribonuclease YhaM of Bacillus mycoides (strain KBAB4) (Bacillus weihenstephanensis).